Consider the following 65-residue polypeptide: Metallothionein-like protein 3B (65 aa).

It belongs to the metallothionein superfamily. Type 15 family.

Metallothioneins have a high content of cysteine residues that bind various heavy metals. In Oryza sativa subsp. indica (Rice), this protein is Metallothionein-like protein 3B (MT3B).